The sequence spans 689 residues: Methionine--tRNA ligase (689 aa).

Residues 15–25 (PYANGPIHLGH) carry the 'HIGH' region motif. Cys-146, Cys-149, Cys-159, and Cys-162 together coordinate Zn(2+). The 'KMSKS' region motif lies at 332–336 (KMSKS). Lys-335 is an ATP binding site. One can recognise a tRNA-binding domain in the interval 588-689 (DFAKIDLRIA…EGAQPGMRVK (102 aa)).

Belongs to the class-I aminoacyl-tRNA synthetase family. MetG type 1 subfamily. In terms of assembly, homodimer. Zn(2+) serves as cofactor.

The protein localises to the cytoplasm. The catalysed reaction is tRNA(Met) + L-methionine + ATP = L-methionyl-tRNA(Met) + AMP + diphosphate. Is required not only for elongation of protein synthesis but also for the initiation of all mRNA translation through initiator tRNA(fMet) aminoacylation. In Shewanella baltica (strain OS155 / ATCC BAA-1091), this protein is Methionine--tRNA ligase.